Reading from the N-terminus, the 351-residue chain is tRNA (guanine(26)-N(2))-dimethyltransferase (351 aa).

Positions 4 to 350 (VLRREGAVQF…AGYGEVKRAL (347 aa)) constitute a Trm1 methyltransferase domain. 5 residues coordinate S-adenosyl-L-methionine: arginine 39, arginine 65, aspartate 83, aspartate 109, and alanine 110.

The protein belongs to the class I-like SAM-binding methyltransferase superfamily. Trm1 family.

The catalysed reaction is guanosine(26) in tRNA + 2 S-adenosyl-L-methionine = N(2)-dimethylguanosine(26) in tRNA + 2 S-adenosyl-L-homocysteine + 2 H(+). In terms of biological role, dimethylates a single guanine residue at position 26 of a number of tRNAs using S-adenosyl-L-methionine as donor of the methyl groups. The protein is tRNA (guanine(26)-N(2))-dimethyltransferase of Pyrobaculum neutrophilum (strain DSM 2338 / JCM 9278 / NBRC 100436 / V24Sta) (Thermoproteus neutrophilus).